A 413-amino-acid chain; its full sequence is Multifunctional CCA protein (413 aa).

The ATP site is built by glycine 8 and arginine 11. Glycine 8 and arginine 11 together coordinate CTP. Aspartate 21 and aspartate 23 together coordinate Mg(2+). Arginine 91, arginine 137, and arginine 140 together coordinate ATP. The CTP site is built by arginine 91, arginine 137, and arginine 140. The region spanning 228–329 (TGIHTLMVLA…LKVFDKADAW (102 aa)) is the HD domain.

Belongs to the tRNA nucleotidyltransferase/poly(A) polymerase family. Bacterial CCA-adding enzyme type 1 subfamily. In terms of assembly, monomer. Can also form homodimers and oligomers. It depends on Mg(2+) as a cofactor. Ni(2+) is required as a cofactor.

It carries out the reaction a tRNA precursor + 2 CTP + ATP = a tRNA with a 3' CCA end + 3 diphosphate. The catalysed reaction is a tRNA with a 3' CCA end + 2 CTP + ATP = a tRNA with a 3' CCACCA end + 3 diphosphate. Functionally, catalyzes the addition and repair of the essential 3'-terminal CCA sequence in tRNAs without using a nucleic acid template. Adds these three nucleotides in the order of C, C, and A to the tRNA nucleotide-73, using CTP and ATP as substrates and producing inorganic pyrophosphate. tRNA 3'-terminal CCA addition is required both for tRNA processing and repair. Also involved in tRNA surveillance by mediating tandem CCA addition to generate a CCACCA at the 3' terminus of unstable tRNAs. While stable tRNAs receive only 3'-terminal CCA, unstable tRNAs are marked with CCACCA and rapidly degraded. The protein is Multifunctional CCA protein of Aeromonas salmonicida (strain A449).